A 210-amino-acid polypeptide reads, in one-letter code: Ribonuclease HII (210 aa).

The RNase H type-2 domain occupies 2–203 (SGVMGIDEAG…YKRVESEVKQ (202 aa)). A divalent metal cation is bound by residues Asp-8, Glu-9, and Asp-99.

The protein belongs to the RNase HII family. Requires Mn(2+) as cofactor. Mg(2+) is required as a cofactor.

It is found in the cytoplasm. The catalysed reaction is Endonucleolytic cleavage to 5'-phosphomonoester.. Functionally, endonuclease that specifically degrades the RNA of RNA-DNA hybrids. The chain is Ribonuclease HII from Methanopyrus kandleri (strain AV19 / DSM 6324 / JCM 9639 / NBRC 100938).